Here is an 875-residue protein sequence, read N- to C-terminus: Probable ATP-dependent RNA helicase DDX10 (875 aa).

Positions 1 to 43 (MGKTANSPGSGARPDPVRSFNRWKKKHSHRQNKKKQLRKQLKK) are disordered. Thr-4 carries the post-translational modification Phosphothreonine. Ser-7 carries the post-translational modification Phosphoserine. Over residues 21 to 41 (NRWKKKHSHRQNKKKQLRKQL) the composition is skewed to basic residues. A Q motif motif is present at residues 69 to 97 (TRFSDFPLSKKTLKGLQEAQYRLVTEIQK). Residues 89–91 (YRL), Gln-96, and 113–120 (AKTGSGKT) contribute to the ATP site. One can recognise a Helicase ATP-binding domain in the interval 100–274 (IGLALQGKDV…RLSLKNPEYV (175 aa)). The short motif at 222–225 (DEAD) is the DEAD box element. Residues 287 to 448 (TLEQNYIVCE…EIKINPEKLI (162 aa)) enclose the Helicase C-terminal domain. Position 539 is a phosphoserine (Ser-539). Lys-555 carries the post-translational modification N6-acetyllysine. Residues 562 to 631 (GGKRLEGTEH…QFLDRDEEEE (70 aa)) form a disordered region. Over residues 564–575 (KRLEGTEHRQDN) the composition is skewed to basic and acidic residues. Thr-577 carries the post-translational modification Phosphothreonine. Positions 577–593 (TGNEEQEEEEDDEEEME) are enriched in acidic residues. A compositionally biased stretch (polar residues) spans 603 to 613 (QAPSLPNTSEA). A Glycyl lysine isopeptide (Lys-Gly) (interchain with G-Cter in SUMO2) cross-link involves residue Lys-649. A disordered region spans residues 703–850 (MQKSAIKDAE…HNRKKARWDT (148 aa)). The span at 727-741 (ERLQEEDKFDKEEYR) shows a compositional bias: basic and acidic residues. Positions 742–751 (KKIKAKHREK) are enriched in basic residues. Basic and acidic residues predominate over residues 752–771 (RLKEREARREANKRQAKAKD). Residues 772 to 790 (EEEAFLDWSDDDDDDDDGF) show a composition bias toward acidic residues. At Ser-780 the chain carries Phosphoserine. Over residues 812 to 821 (MENKISDTKK) the composition is skewed to basic and acidic residues. Position 831 is a phosphoserine (Ser-831).

It belongs to the DEAD box helicase family. DDX10/DBP4 subfamily. In terms of assembly, interacts with AIM2; this interaction promotes AIM2 stability. Interacts with SCNA; this interaction causes DDX10 mislocalization to the nucleoplasm and cytoplasmic inclusions. As to expression, high in testis but widely expressed.

The protein resides in the cytoplasm. It localises to the nucleus. The protein localises to the nucleolus. The enzyme catalyses ATP + H2O = ADP + phosphate + H(+). Its function is as follows. Putative ATP-dependent RNA helicase that plays various role in innate immunity or inflammation. Plays a role in the enhancement of AIM2-induced inflammasome activation by interacting with AIM2 and stabilizing its protein level. Negatively regulates viral infection by promoting interferon beta production and interferon stimulated genes/ISGs expression. The polypeptide is Probable ATP-dependent RNA helicase DDX10 (DDX10) (Homo sapiens (Human)).